Consider the following 491-residue polypeptide: Cobyric acid synthase (491 aa).

The region spanning 258 to 445 is the GATase cobBQ-type domain; it reads ALKVAVPVLG…MHGLFGADAF (188 aa). The active-site Nucleophile is the cysteine 340. The active site involves histidine 437.

This sequence belongs to the CobB/CobQ family. CobQ subfamily.

Its pathway is cofactor biosynthesis; adenosylcobalamin biosynthesis. Its function is as follows. Catalyzes amidations at positions B, D, E, and G on adenosylcobyrinic A,C-diamide. NH(2) groups are provided by glutamine, and one molecule of ATP is hydrogenolyzed for each amidation. The chain is Cobyric acid synthase from Mesorhizobium japonicum (strain LMG 29417 / CECT 9101 / MAFF 303099) (Mesorhizobium loti (strain MAFF 303099)).